We begin with the raw amino-acid sequence, 616 residues long: Polypeptide N-acetylgalactosaminyltransferase 3 (616 aa).

A helical; Signal-anchor for type II membrane protein membrane pass occupies residues 13–33 (FFHWKLWKFSIIVFVFLVFLF). A catalytic subdomain A region spans residues 182-291 (LPTTSIIIVF…YGWLEPLLAR (110 aa)). The Mn(2+) site is built by Asp-275, His-277, and His-413. A catalytic subdomain B region spans residues 354 to 416 (PIRTPTFAGG…PCSVVGHVFR (63 aa)). Asn-482 is a glycosylation site (N-linked (GlcNAc...) asparagine). In terms of domain architecture, Ricin B-type lectin spans 512 to 616 (NRMCLDVGEN…FQKWIFGQND (105 aa)). Residues Cys-515 and Cys-533 are joined by a disulfide bond. UDP-N-acetyl-alpha-D-galactosamine-binding residues include Asp-517, Glu-520, His-534, and Asn-539. Residues Cys-588 and Cys-601 are joined by a disulfide bond.

It belongs to the glycosyltransferase 2 family. GalNAc-T subfamily. Mn(2+) is required as a cofactor.

The protein localises to the golgi apparatus. It is found in the golgi stack membrane. It carries out the reaction L-seryl-[protein] + UDP-N-acetyl-alpha-D-galactosamine = a 3-O-[N-acetyl-alpha-D-galactosaminyl]-L-seryl-[protein] + UDP + H(+). The enzyme catalyses L-threonyl-[protein] + UDP-N-acetyl-alpha-D-galactosamine = a 3-O-[N-acetyl-alpha-D-galactosaminyl]-L-threonyl-[protein] + UDP + H(+). The protein operates within protein modification; protein glycosylation. Catalyzes the initial reaction in O-linked oligosaccharide biosynthesis, the transfer of an N-acetyl-D-galactosamine residue to a serine or threonine residue on the protein receptor. Glycosylates FGF23. This is Polypeptide N-acetylgalactosaminyltransferase 3 (GALNT3) from Taeniopygia guttata (Zebra finch).